The sequence spans 619 residues: 1-deoxy-D-xylulose-5-phosphate synthase (619 aa).

Thiamine diphosphate-binding positions include H80 and 121–123 (GHS). D152 is a Mg(2+) binding site. Residues 153 to 154 (GA), N181, Y288, and E370 each bind thiamine diphosphate. Residue N181 coordinates Mg(2+).

The protein belongs to the transketolase family. DXPS subfamily. In terms of assembly, homodimer. Mg(2+) serves as cofactor. It depends on thiamine diphosphate as a cofactor.

It catalyses the reaction D-glyceraldehyde 3-phosphate + pyruvate + H(+) = 1-deoxy-D-xylulose 5-phosphate + CO2. It participates in metabolic intermediate biosynthesis; 1-deoxy-D-xylulose 5-phosphate biosynthesis; 1-deoxy-D-xylulose 5-phosphate from D-glyceraldehyde 3-phosphate and pyruvate: step 1/1. In terms of biological role, catalyzes the acyloin condensation reaction between C atoms 2 and 3 of pyruvate and glyceraldehyde 3-phosphate to yield 1-deoxy-D-xylulose-5-phosphate (DXP). In Yersinia pseudotuberculosis serotype I (strain IP32953), this protein is 1-deoxy-D-xylulose-5-phosphate synthase.